Reading from the N-terminus, the 91-residue chain is Large ribosomal subunit protein bL28 (91 aa).

The segment at 1 to 23 is disordered; it reads MSRVCELTGKGPMSGNNVSHANN.

This sequence belongs to the bacterial ribosomal protein bL28 family.

The chain is Large ribosomal subunit protein bL28 from Paracoccus denitrificans (strain Pd 1222).